The following is a 425-amino-acid chain: UPF0597 protein VSAL_I0741 (425 aa).

It belongs to the UPF0597 family.

This chain is UPF0597 protein VSAL_I0741, found in Aliivibrio salmonicida (strain LFI1238) (Vibrio salmonicida (strain LFI1238)).